Reading from the N-terminus, the 189-residue chain is Small ribosomal subunit protein uS4 (189 aa).

An S4 RNA-binding domain is found at 107-178 (RRLQTQVFKL…AGRVKRKNQG (72 aa)). Residues 160 to 189 (HNSPYGGGRAGRVKRKNQGKGGEEGAEEEE) are disordered.

Belongs to the universal ribosomal protein uS4 family. Component of the small ribosomal subunit. Mature ribosomes consist of a small (40S) and a large (60S) subunit. The 40S subunit contains about 32 different proteins and 1 molecule of RNA (18S). The 60S subunit contains 45 different proteins and 3 molecules of RNA (25S, 5.8S and 5S).

Its subcellular location is the cytoplasm. Functionally, component of the ribosome, a large ribonucleoprotein complex responsible for the synthesis of proteins in the cell. The small ribosomal subunit (SSU) binds messenger RNAs (mRNAs) and translates the encoded message by selecting cognate aminoacyl-transfer RNA (tRNA) molecules. The large subunit (LSU) contains the ribosomal catalytic site termed the peptidyl transferase center (PTC), which catalyzes the formation of peptide bonds, thereby polymerizing the amino acids delivered by tRNAs into a polypeptide chain. The nascent polypeptides leave the ribosome through a tunnel in the LSU and interact with protein factors that function in enzymatic processing, targeting, and the membrane insertion of nascent chains at the exit of the ribosomal tunnel. RPS9B is involved in nucleolar processing of pre-18S ribosomal RNA and ribosome assembly. The polypeptide is Small ribosomal subunit protein uS4 (RPS9B) (Candida albicans (strain SC5314 / ATCC MYA-2876) (Yeast)).